The sequence spans 217 residues: Adenylate kinase (217 aa).

10–15 (GAGKGT) is an ATP binding site. The NMP stretch occupies residues 30-59 (STGDMLRAAVKAGTPLGLQAKDIMASGGLV). AMP is bound by residues T31, R36, 57-59 (GLV), 85-88 (GFPR), and Q92. An LID region spans residues 122-159 (GRRVHEASGRVYHIIHNAPRVEGHDDVTGEPLVQRPDD). Residues R123 and 132-133 (VY) contribute to the ATP site. AMP-binding residues include R156 and R167. G203 serves as a coordination point for ATP.

Belongs to the adenylate kinase family. As to quaternary structure, monomer.

The protein localises to the cytoplasm. The enzyme catalyses AMP + ATP = 2 ADP. It participates in purine metabolism; AMP biosynthesis via salvage pathway; AMP from ADP: step 1/1. In terms of biological role, catalyzes the reversible transfer of the terminal phosphate group between ATP and AMP. Plays an important role in cellular energy homeostasis and in adenine nucleotide metabolism. The chain is Adenylate kinase from Cellvibrio japonicus (strain Ueda107) (Pseudomonas fluorescens subsp. cellulosa).